We begin with the raw amino-acid sequence, 26 residues long: Dermaseptin-J2 (26 aa).

Val-26 bears the Valine amide mark.

Expressed by the skin glands.

The protein resides in the secreted. Functionally, has antimicrobial activity. The sequence is that of Dermaseptin-J2 from Phasmahyla jandaia (Jandaia leaf frog).